A 367-amino-acid polypeptide reads, in one-letter code: Protein trichome birefringence-like 39 (367 aa).

Residues 7–29 form a helical; Signal-anchor for type II membrane protein membrane-spanning segment; that stretch reads GNPSFLFFFFFFLCLSTVSAYIN. The GDS motif motif lies at 120–122; it reads GDS. The DCXHWCLPGXXDXWN motif motif lies at 343–357; that stretch reads DCSHWCLPGLPDTWN.

The protein belongs to the PC-esterase family. TBL subfamily.

Its subcellular location is the membrane. Functionally, may act as a bridging protein that binds pectin and other cell wall polysaccharides. Probably involved in maintaining esterification of pectins. May be involved in the specific O-acetylation of cell wall polymers. The sequence is that of Protein trichome birefringence-like 39 (TBL39) from Arabidopsis thaliana (Mouse-ear cress).